Consider the following 402-residue polypeptide: Putative polyketide beta-ketoacyl synthase 2 (402 aa).

Disordered stretches follow at residues 1-30 and 188-222; these read MTPV…WAPR and VEPR…FDRD. The Ketosynthase family 3 (KS3) domain occupies 1–400; the sequence is MTPVAVTGMG…GFNSALVVRA (400 aa). Low complexity predominate over residues 192-205; that stretch reads SAPGAGSPSSPAGG.

This sequence belongs to the thiolase-like superfamily. Beta-ketoacyl-ACP synthases family.

It functions in the pathway antifungal biosynthesis; monensin biosynthesis. This Streptomyces virginiae (Streptomyces cinnamonensis) protein is Putative polyketide beta-ketoacyl synthase 2.